A 463-amino-acid chain; its full sequence is MSNVVTRFAPSPTGHLHIGGARTAIFNWLLARHFGGRFVLRIEDTDTERSKQEYTDSILASMKWLGLDWDGDLIYQSERFDIYNSYIDRLLESGHAYWCECPPDEVEKMREEARAKGLKPRYNGRCRSRDLGPGDGRVVRLKAPAEGRIVFDDLVKGTVAFDVAELDDMVLRRSDGAPTYNLAVVVDDATMGVTHVLRGDDHLSNTPKQILLYQALGFDLPRFGHVPMILGPDRKKLSKRHGAKAVIEYEQYGLLPQALVNYLVRLGWSHGDQEIFALEELVEKFGTENLNSSAAGFDPDKLEWLNGHYLRETSPEELARLVLPFVAAEGFDVDASRLAQLVPLFRERANNLVELARVMRFMLVPAAEVEYDAAAVAKALTEEGRRHVAGVREALAALGTFDREGCEKAIHDYVEGNGLKFKQVAPAVRVAVVGAMGGPGLPDMMALLGRDDVLARLDRAVAL.

Positions 10–20 match the 'HIGH' region motif; the sequence is PSPTGHLHIGG. The 'KMSKS' region signature appears at 236–240; the sequence is KLSKR. K239 serves as a coordination point for ATP.

It belongs to the class-I aminoacyl-tRNA synthetase family. Glutamate--tRNA ligase type 1 subfamily. Monomer.

The protein resides in the cytoplasm. The catalysed reaction is tRNA(Glu) + L-glutamate + ATP = L-glutamyl-tRNA(Glu) + AMP + diphosphate. In terms of biological role, catalyzes the attachment of glutamate to tRNA(Glu) in a two-step reaction: glutamate is first activated by ATP to form Glu-AMP and then transferred to the acceptor end of tRNA(Glu). The chain is Glutamate--tRNA ligase from Nitratidesulfovibrio vulgaris (strain ATCC 29579 / DSM 644 / CCUG 34227 / NCIMB 8303 / VKM B-1760 / Hildenborough) (Desulfovibrio vulgaris).